A 733-amino-acid chain; its full sequence is Tyrosine-protein kinase ptk (733 aa).

The next 2 membrane-spanning stretches (helical) occupy residues Leu19 to Ile39 and Leu438 to Leu458. Gly542–Ser550 is an ATP binding site.

This sequence belongs to the etk/wzc family. Requires Mg(2+) as cofactor. The cofactor is Mn(2+). Autophosphorylated on several Tyr residues. Dephosphorylated by ptp.

It is found in the cell inner membrane. It carries out the reaction L-tyrosyl-[protein] + ATP = O-phospho-L-tyrosyl-[protein] + ADP + H(+). It functions in the pathway glycan metabolism; exopolysaccharide biosynthesis. Its function is as follows. May be involved in the production and the transport of exopolysaccharides. This chain is Tyrosine-protein kinase ptk (ptk), found in Acinetobacter johnsonii.